We begin with the raw amino-acid sequence, 173 residues long: Peptide methionine sulfoxide reductase MsrA (173 aa).

Cysteine 10 is a catalytic residue.

The protein belongs to the MsrA Met sulfoxide reductase family.

The enzyme catalyses L-methionyl-[protein] + [thioredoxin]-disulfide + H2O = L-methionyl-(S)-S-oxide-[protein] + [thioredoxin]-dithiol. It catalyses the reaction [thioredoxin]-disulfide + L-methionine + H2O = L-methionine (S)-S-oxide + [thioredoxin]-dithiol. In terms of biological role, has an important function as a repair enzyme for proteins that have been inactivated by oxidation. Catalyzes the reversible oxidation-reduction of methionine sulfoxide in proteins to methionine. The sequence is that of Peptide methionine sulfoxide reductase MsrA from Nautilia profundicola (strain ATCC BAA-1463 / DSM 18972 / AmH).